We begin with the raw amino-acid sequence, 509 residues long: Protein Jade-1 (509 aa).

The tract at residues 1–45 is disordered; the sequence is MKRGRLPSSSEDSDDNGSLSTTWSQNSRSQHRRSSCSRPEDRKPS. The tract at residues 60–80 is interaction with KAT7/HBO1 and histones; that stretch reads DSYQLNPDEYYVLADPWRQEW. Positions 80 to 188 are interaction with histones; sequence WEKGVQVPVS…EQRCYDNMNH (109 aa). Position 89 is a phosphoserine (Ser89). Thr92 carries the phosphothreonine modification. Lys114 is covalently cross-linked (Glycyl lysine isopeptide (Lys-Gly) (interchain with G-Cter in SUMO2)). The segment at 203-253 adopts a PHD-type 1 zinc-finger fold; that stretch reads YVVCDVCQSPDGEDGNEMVFCDKCNICVHQACYGILKVPEGSWLCRTCALG. The C2HC pre-PHD-type zinc finger occupies 255–289; it reads QPKCLLCPKKGGAMKPTRSGTKWVHVSCALWIPEV. A PHD-type 2 zinc finger spans residues 313 to 369; the sequence is LVCSLCNEKFGASIQCSVKNCRTAFHVTCAFDRGLEMKTILAENDEVKFKSYCPKHS. The disordered stretch occupies residues 373-399; it reads KAEEGLGEGTAQENGAPECSPRDPLEP.

This sequence belongs to the JADE family. In terms of assembly, component of the HBO1 complex composed at least of ING4 or ING5, KAT7/HBO1, MEAF6, and one of JADE1, JADE2 and JADE3. Interacts with NPHP4.

Its subcellular location is the nucleus. The protein localises to the chromosome. It is found in the cytoplasm. The protein resides in the cytoskeleton. It localises to the cilium basal body. Its function is as follows. Scaffold subunit of some HBO1 complexes, which have a histone H4 acetyltransferase activity. Plays a key role in HBO1 complex by directing KAT7/HBO1 specificity towards histone H4 acetylation (H4K5ac, H4K8ac and H4K12ac), regulating DNA replication initiation, regulating DNA replication initiation. May also promote acetylation of nucleosomal histone H4 by KAT5. Promotes apoptosis. May act as a renal tumor suppressor. Negatively regulates canonical Wnt signaling; at least in part, cooperates with NPHP4 in this function. This Bos taurus (Bovine) protein is Protein Jade-1 (JADE1).